We begin with the raw amino-acid sequence, 368 residues long: L-arabinitol 4-dehydrogenase (368 aa).

Zn(2+) contacts are provided by Cys-52, His-77, Glu-78, Cys-107, Cys-110, Cys-113, Cys-121, and Glu-162. Asp-210, Arg-215, and Ile-282 together coordinate NAD(+).

Belongs to the zinc-containing alcohol dehydrogenase family. Homotetramer. The cofactor is Zn(2+).

It catalyses the reaction L-arabinitol + NAD(+) = L-xylulose + NADH + H(+). Its function is as follows. Plays a key role in liamocins biosynthesis by providing the arabinol moity that is linked to 3,5-dihydroxydecanoic acid (provided by the HR-PKS PKS1) via ester bond formation catalyzed by the esterase EST1. The sequence is that of L-arabinitol 4-dehydrogenase from Aureobasidium melanogenum (Aureobasidium pullulans var. melanogenum).